A 79-amino-acid polypeptide reads, in one-letter code: Acyl carrier protein (79 aa).

One can recognise a Carrier domain in the interval 2-79 (ASKEEILAGL…QDAVDFIXGA (78 aa)). O-(pantetheine 4'-phosphoryl)serine is present on Ser-40.

The protein belongs to the acyl carrier protein (ACP) family. 4'-phosphopantetheine is transferred from CoA to a specific serine of apo-ACP by AcpS. This modification is essential for activity because fatty acids are bound in thioester linkage to the sulfhydryl of the prosthetic group.

The protein resides in the cytoplasm. Its pathway is lipid metabolism; fatty acid biosynthesis. In terms of biological role, carrier of the growing fatty acid chain in fatty acid biosynthesis. In Myxococcus xanthus, this protein is Acyl carrier protein.